A 239-amino-acid polypeptide reads, in one-letter code: Thymidylate kinase (239 aa).

10–17 (GINGVGKS) is an ATP binding site.

It belongs to the thymidylate kinase family.

The catalysed reaction is dTMP + ATP = dTDP + ADP. Its pathway is pyrimidine metabolism; dTTP biosynthesis. Functionally, catalyzes the conversion of dTMP to dTDP. The sequence is that of Thymidylate kinase (TMK) from African swine fever virus (isolate Warthog/Namibia/Wart80/1980) (ASFV).